Consider the following 187-residue polypeptide: Inner membrane-spanning protein YciB (187 aa).

5 helical membrane passes run 25–45 (ATGALIAATAIQIVVTYALYK), 50–70 (MQLITFLMVAIFGGMTIFLHD), 76–96 (WKVTIVYAVFAIGLTVSHVMG), 118–138 (INWAWVGFFTFCAGLNIYVAY), and 148–168 (FKVFGLLAATLVFTVLTGGYI).

This sequence belongs to the YciB family.

The protein resides in the cell inner membrane. Plays a role in cell envelope biogenesis, maintenance of cell envelope integrity and membrane homeostasis. This Vibrio vulnificus (strain CMCP6) protein is Inner membrane-spanning protein YciB.